A 510-amino-acid polypeptide reads, in one-letter code: Probable inorganic carbon transporter subunit DabB (510 aa).

The next 14 helical transmembrane spans lie at 9-29 (TLLT…LLFL), 37-57 (FVHI…LALV), 68-88 (WHLD…GLII), 105-122 (YFAL…AWLS), 125-145 (LRFM…LIGL), 158-178 (ISGY…IWLF), 204-224 (TGIN…WPFQ), 226-246 (WLIE…AGLV), 266-286 (QIIL…ISLV), 303-323 (GFML…HLIL), 355-375 (LWMI…WFIT), 382-402 (LVSA…LVVF), 410-430 (IAGL…HNSL), and 446-466 (APAV…CTFV).

This sequence belongs to the inorganic carbon transporter (TC 9.A.2) DabB family. Forms a complex with DabA.

It localises to the cell membrane. Functionally, part of an energy-coupled inorganic carbon pump. Expression of both dabA and dabB (DA2) restores growth in ambient air to E.coli deleted of its carbonic anhydrase genes (called CAfree, deletion of 'can' and 'cynT'). This Bacillus anthracis protein is Probable inorganic carbon transporter subunit DabB.